The following is a 280-amino-acid chain: BURP domain protein USPL1 (280 aa).

The first 24 residues, 1–24 (MASTFRLSISFLTLILFSLWVVEA), serve as a signal peptide directing secretion. Residues 58-280 (YFTLNDLKLG…PLDNIVWVTK (223 aa)) enclose the BURP domain.

Expressed in cotyledons, radicle, floral buds, open flowers, roots and developing seeds, but not in leaves. Highly expressed in the root tips. Detected in young leaves, hypocotyls, stems and mature seed funiculum.

The protein localises to the protein storage vacuole. Its subcellular location is the golgi apparatus. It is found in the golgi stack. It localises to the trans-Golgi network. The protein resides in the prevacuolar compartment. Functionally, associated with the protein storage vacuole formation. The polypeptide is BURP domain protein USPL1 (Arabidopsis thaliana (Mouse-ear cress)).